We begin with the raw amino-acid sequence, 383 residues long: Processive diacylglycerol beta-glucosyltransferase (383 aa).

Belongs to the glycosyltransferase 28 family. UgtP subfamily.

It localises to the cell membrane. The catalysed reaction is a 1,2-diacyl-3-O-(beta-D-glucopyranosyl)-sn-glycerol + UDP-alpha-D-glucose = a 1,2-diacyl-3-O-(beta-D-Glc-(1-&gt;6)-beta-D-Glc)-sn-glycerol + UDP + H(+). The enzyme catalyses a 1,2-diacyl-3-O-(beta-D-Glc-(1-&gt;6)-beta-D-Glc)-sn-glycerol + UDP-alpha-D-glucose = a 1,2-diacyl-3-O-(beta-D-Glc-(1-&gt;6)-beta-D-Glc-(1-&gt;6)-beta-D-Glc)-sn-glycerol + UDP + H(+). It catalyses the reaction a 1,2-diacyl-sn-glycerol + UDP-alpha-D-glucose = a 1,2-diacyl-3-O-(beta-D-glucopyranosyl)-sn-glycerol + UDP + H(+). Its pathway is glycolipid metabolism; diglucosyl-diacylglycerol biosynthesis. Its function is as follows. Processive glucosyltransferase involved in the biosynthesis of both the bilayer- and non-bilayer-forming membrane glucolipids. Is able to successively transfer up to three glucosyl residues to diacylglycerol (DAG), thereby catalyzing the formation of beta-monoglucosyl-DAG (3-O-(beta-D-glucopyranosyl)-1,2-diacyl-sn-glycerol), beta-diglucosyl-DAG (3-O-(beta-D-glucopyranosyl-beta-(1-&gt;6)-D-glucopyranosyl)-1,2-diacyl-sn-glycerol) and beta-triglucosyl-DAG (3-O-(beta-D-glucopyranosyl-beta-(1-&gt;6)-D-glucopyranosyl-beta-(1-&gt;6)-D-glucopyranosyl)-1,2-diacyl-sn-glycerol). Beta-diglucosyl-DAG is the predominant glycolipid found in Bacillales and is also used as a membrane anchor for lipoteichoic acid (LTA). The polypeptide is Processive diacylglycerol beta-glucosyltransferase (Bacillus pumilus (strain SAFR-032)).